A 308-amino-acid polypeptide reads, in one-letter code: uncharacterized protein (308 aa).

A signal peptide spans 1 to 18; that stretch reads MKIILLFLAALASFTVHA.

This is an uncharacterized protein from Escherichia coli (strain K12).